A 63-amino-acid polypeptide reads, in one-letter code: MLKSASGALANVLKRSLVPAARVTAVVPLRRSHGGPVESDEEFDSRYEAFFNRKDIDGWEIRK.

This sequence belongs to the cytochrome c oxidase subunit 5A family. In terms of assembly, component of the cytochrome c oxidase (complex IV, CIV), a multisubunit enzyme composed of a catalytic core of 3 subunits and several supernumerary subunits. The complex exists as a monomer or a dimer and forms supercomplexes (SCs) in the inner mitochondrial membrane with ubiquinol-cytochrome c oxidoreductase (cytochrome b-c1 complex, complex III, CIII).

Its subcellular location is the mitochondrion inner membrane. Its pathway is energy metabolism; oxidative phosphorylation. In terms of biological role, component of the cytochrome c oxidase, the last enzyme in the mitochondrial electron transport chain which drives oxidative phosphorylation. The respiratory chain contains 3 multisubunit complexes succinate dehydrogenase (complex II, CII), ubiquinol-cytochrome c oxidoreductase (cytochrome b-c1 complex, complex III, CIII) and cytochrome c oxidase (complex IV, CIV), that cooperate to transfer electrons derived from NADH and succinate to molecular oxygen, creating an electrochemical gradient over the inner membrane that drives transmembrane transport and the ATP synthase. Cytochrome c oxidase is the component of the respiratory chain that catalyzes the reduction of oxygen to water. Electrons originating from reduced cytochrome c in the intermembrane space (IMS) are transferred via the dinuclear copper A center (CU(A)) of subunit 2 and heme A of subunit 1 to the active site in subunit 1, a binuclear center (BNC) formed by heme A3 and copper B (CU(B)). The BNC reduces molecular oxygen to 2 water molecules using 4 electrons from cytochrome c in the IMS and 4 protons from the mitochondrial matrix. The sequence is that of Cytochrome c oxidase subunit 5A, mitochondrial (COVA) from Manduca sexta (Tobacco hawkmoth).